The chain runs to 563 residues: E3 ubiquitin-protein ligase IpaH2.5 (563 aa).

The segment at 1-270 is interaction with target proteins; sequence MIKSTNIQVI…PDYSGPQIFF (270 aa). LRR repeat units lie at residues 69-90, 91-115, 117-130, 131-150, 151-170, 171-195, 197-209, and 210-233; these read LQNQ…PDLP, PQIT…MLKV, HAQF…PALP, ETLE…PFLP, ENLT…PLLP, PELK…KLEG, ALAN…LPEL, and PFSM…VLRL. A linker region spans residues 271–281; sequence SMGNSATISAP. The E3 ubiquitin-protein ligase catalytic domain stretch occupies residues 282-563; the sequence is EHSLADAVTA…YRQLTDEVLA (282 aa). In terms of domain architecture, NEL spans 284–563; that stretch reads SLADAVTAWF…YRQLTDEVLA (280 aa). Catalysis depends on Cys368, which acts as the Glycyl thioester intermediate.

It belongs to the LRR-containing bacterial E3 ligase family. In terms of assembly, interacts with human RBCK1/HOIL-1 and RNF31/HOIP components of the LUBAC complex. In terms of processing, ubiquitinated in the presence of host E1 ubiquitin-activating enzyme, E2 ubiquitin-conjugating enzyme and ubiquitin.

The protein resides in the secreted. It is found in the host cytoplasm. The enzyme catalyses S-ubiquitinyl-[E2 ubiquitin-conjugating enzyme]-L-cysteine + [acceptor protein]-L-lysine = [E2 ubiquitin-conjugating enzyme]-L-cysteine + N(6)-ubiquitinyl-[acceptor protein]-L-lysine.. It participates in protein modification; protein ubiquitination. Its activity is regulated as follows. Exists in an autoinhibited state in the absence of substrate protein, probably due to interactions of the leucine-rich repeat domain with the catalytic domain. Is activated upon binding to a substrate protein. E3 ubiquitin-protein ligase effector that inhibits host cell innate immunity during bacterial infection by catalyzing 'Lys-48'-linked polyubiquitination and subsequent degradation of host RNF31/HOIP. Host RNF31/HOIP is the catalytic component of the LUBAC complex, which conjugates linear ('Met-1'-linked) polyubiquitin chains at the surface of bacteria invading the host cytosol to form the ubiquitin coat surrounding bacteria. The bacterial ubiquitin coat acts as an 'eat-me' signal for xenophagy and promotes NF-kappa-B activation. In Shigella flexneri, this protein is E3 ubiquitin-protein ligase IpaH2.5.